The following is a 37-amino-acid chain: Large ribosomal subunit protein bL36 (37 aa).

This sequence belongs to the bacterial ribosomal protein bL36 family.

This is Large ribosomal subunit protein bL36 from Borreliella afzelii (strain PKo) (Borrelia afzelii).